The sequence spans 90 residues: uncharacterized protein (90 aa).

This is an uncharacterized protein from Saccharomyces cerevisiae (strain ATCC 204508 / S288c) (Baker's yeast).